The chain runs to 454 residues: MALQLGRLSSGPCWLVARGGCGGPRAWSQCGGGGLRAWSQRSAAGRVCRPPGPAGTEQSRGLGHGSTSRGGPWVGTGLAAALAGLVGLATAAFGHVQRAEMLPKTSGTRATSLGRPEEEEDELAHRCSSFMAPPVTDLGELRRRPGDMKTKMELLILETQAQVCQALAQVDGGANFSVDRWERKEGGGGISCVLQDGCVFEKAGVSISVVHGNLSEEAAKQMRSRGKVLKTKDGKLPFCAMGVSSVIHPKNPHAPTIHFNYRYFEVEEADGNKQWWFGGGCDLTPTYLNQEDAVHFHRTLKEACDQHGPDLYPKFKKWCDDYFFIAHRGERRGIGGIFFDDLDSPSKEEVFRFVQSCARAVVPSYIPLVKKHCDDSFTPQEKLWQQLRRGRYVEFNLLYDRGTKFGLFTPGSRIESILMSLPLTARWEYMHSPSENSKEAEILEVLRHPRDWVR.

Residues 1–110 (MALQLGRLSS…MLPKTSGTRA (110 aa)) constitute a mitochondrion transit peptide. The segment at 43–70 (AAGRVCRPPGPAGTEQSRGLGHGSTSRG) is disordered. A Phosphoserine modification is found at Ser-112. The segment at 193–202 (VLQDGCVFEK) is important for dimerization. Ser-244 is a coproporphyrinogen III binding site. Residue His-258 is the Proton donor of the active site. 260–262 (NYR) is a binding site for coproporphyrinogen III. The interval 392–428 (YVEFNLLYDRGTKFGLFTPGSRIESILMSLPLTARWE) is important for dimerization. Residue Lys-404 is modified to N6-acetyllysine; alternate. Residue Lys-404 is modified to N6-succinyllysine; alternate. A coproporphyrinogen III-binding site is contributed by 411–413 (GSR).

It belongs to the aerobic coproporphyrinogen-III oxidase family. In terms of assembly, homodimer.

Its subcellular location is the mitochondrion intermembrane space. It carries out the reaction coproporphyrinogen III + O2 + 2 H(+) = protoporphyrinogen IX + 2 CO2 + 2 H2O. Its pathway is porphyrin-containing compound metabolism; protoporphyrin-IX biosynthesis; protoporphyrinogen-IX from coproporphyrinogen-III (O2 route): step 1/1. In terms of biological role, catalyzes the aerobic oxidative decarboxylation of propionate groups of rings A and B of coproporphyrinogen-III to yield the vinyl groups in protoporphyrinogen-IX and participates to the sixth step in the heme biosynthetic pathway. The sequence is that of Oxygen-dependent coproporphyrinogen-III oxidase, mitochondrial from Homo sapiens (Human).